The chain runs to 229 residues: Histone H3-like centromeric protein CSE4 (229 aa).

Positions 1 to 35 are enriched in polar residues; sequence MSSKQQWVSSAIQSDSSGRSLSNVNRLAGDQQSIN. Positions 1–78 are disordered; the sequence is MSSKQQWVSS…DIETDYEDQA (78 aa). Positions 53–68 are enriched in basic and acidic residues; it reads PRREERRRYESSKSDL. Residues 115–132 carry the Nuclear localization signal motif; that stretch reads KRREKQRKQSLKRVEKKY. Residues 132-229 form an H3-like region; that stretch reads YTPSELALYE…LARRIRGQFI (98 aa).

This sequence belongs to the histone H3 family. Component of centromeric nucleosomes, where DNA is wrapped around a histone octamer core. The octamer contains two molecules each of H2A, H2B, CSE4/CENPA and H4 assembled in one CSE4-H4 heterotetramer and two H2A-H2B heterodimers. Interacts with the inner kinetochore. Interacts with the central kinetochore protein CTF19. Interacts with YTA7. Ubiquitinated. Is degraded through ubiquitin-mediated proteolysis when not protected by its association to the kinetochore.

Its subcellular location is the nucleus. It localises to the chromosome. The protein resides in the centromere. Functionally, histone H3-like nucleosomal protein that is specifically found in centromeric nucleosomes. Replaces conventional H3 in the nucleosome core of centromeric chromatin that serves as an assembly site for the inner kinetochore. Required for recruitment and assembly of kinetochore proteins, mitotic progression and chromosome segregation. May serve as an epigenetic mark that propagates centromere identity through replication and cell division. Required for functional chromatin architecture at the yeast 2-micron circle partitioning locus and promotes equal plasmid segregation. This chain is Histone H3-like centromeric protein CSE4 (CSE4), found in Saccharomyces cerevisiae (strain ATCC 204508 / S288c) (Baker's yeast).